The following is a 1209-amino-acid chain: Putative lysine-specific demethylase JMJ16 (1209 aa).

Residues 146–187 form the JmjN domain; sequence APVFYPSEEEFEDTLNYIAKIRPEAEKYGICRIVPPPSWKPP. Positions 217 to 224 match the Nuclear localization signal motif; the sequence is MKKISKLP. Positions 361–527 constitute a JmjC domain; the sequence is KYAKSGWNLN…HGQIAIELYC (167 aa). Positions 407, 409, and 495 each coordinate Fe cation. 8 residues coordinate Zn(2+): Cys-617, Cys-620, Cys-631, Cys-633, Cys-640, His-643, Cys-648, and Cys-650. The segment at 617-667 adopts a C5HC2 zinc-finger fold; sequence CCICFFDLHLSAAGCRCSPEKYSCLTHVKELCSCPWVTKYFLFRYDIDELN. Positions 872-900 are disordered; sequence DTRNTISLPTNDQKTMRRDVPSSTSHAEV. The span at 875–884 shows a compositional bias: polar residues; that stretch reads NTISLPTNDQ. The FYR N-terminal domain maps to 974-1032; that stretch reads VVRRINCNVEPLSYGCVLSGKSWCSRRAIFPKGFRSRVKYINILDPTNMCFYISEILDA. The FYR C-terminal domain occupies 1034 to 1124; that stretch reads RNSPLFMVYL…RVCTDYWDSR (91 aa).

It belongs to the JARID1 histone demethylase family. In terms of assembly, interacts with MMD1 in the nucleus of male meiocytes, especially on pachytene chromosomes. Fe(2+) is required as a cofactor. As to expression, confined to inflorescences.

The protein resides in the nucleus. The catalysed reaction is N(6),N(6),N(6)-trimethyl-L-lysyl(4)-[histone H3] + 2-oxoglutarate + O2 = N(6),N(6)-dimethyl-L-lysyl(4)-[histone H3] + formaldehyde + succinate + CO2. It catalyses the reaction N(6),N(6)-dimethyl-L-lysyl(4)-[histone H3] + 2-oxoglutarate + O2 = N(6)-methyl-L-lysyl(4)-[histone H3] + formaldehyde + succinate + CO2. It carries out the reaction N(6)-methyl-L-lysyl(4)-[histone H3] + 2-oxoglutarate + O2 = L-lysyl(4)-[histone H3] + formaldehyde + succinate + CO2. Functions as a histone H3 'Lys-4' (H3K4me) demethylase involved in the negative regulation of gene expression. Active on H3K4me1, H3K4me2 and H3K4me3. Not active on mono-, di- and trimethylated H3K9, H3K27 and H3K36 in somatic cells. However, also active on H3K9 when in complex with MMD1, a meiocyte-specific histone reader. Together with MMD1, promotes gene expression in male meiocytes in an H3K9me3-dependent manner, and contributes to meiotic chromosome condensation by triggering some condensin promoters (e.g. CAP-D3 and CAP-H). Together with JMJ14 and JMJ17, required for plant growth and development. Represses leaf senescence in an age-dependent manner by demethylating H3K4me3 activating histone marks at senescence-associated genes (SAGs) loci, including WRKY53 and SAG201, thus preventing their premature expression. The sequence is that of Putative lysine-specific demethylase JMJ16 from Arabidopsis thaliana (Mouse-ear cress).